A 362-amino-acid polypeptide reads, in one-letter code: MLAAALMSAAFGAHAERLKDIASISGVRSNQLIGYGLVVGLNGTGDQTTQTPFTLQTFNNMLSQFGIKVPPGSGNVQLKNVAAVSVSADLPAFAKPGQQVDITVSSIGNSKSLRGGTLLLTPLKGIDGNVYAIAQGNLVVGGFDAEGRDGSKITVNVPSAGRIPGGASVERSVPSGFNQGNSLTLNLNRSDFTTAKRIVDKINDMLGPGVAQAIDGGSIRVTAPLDPSQRVDYLSILENLEVDPGQAVAKVIINSRTGTIVIGQNVKVSPAAVTHGSLTVTITEDPIVSQPGPLSNGQTAVVPRSRVNAEQEAKPMFKFGPGTTLDEIVRAVNQVGAAPGDLMAILEALKQAGALQADLIVI.

An N-terminal signal peptide occupies residues 1 to 15 (MLAAALMSAAFGAHA).

The protein belongs to the FlgI family. As to quaternary structure, the basal body constitutes a major portion of the flagellar organelle and consists of four rings (L,P,S, and M) mounted on a central rod.

Its subcellular location is the periplasm. The protein localises to the bacterial flagellum basal body. In terms of biological role, assembles around the rod to form the L-ring and probably protects the motor/basal body from shearing forces during rotation. The chain is Flagellar P-ring protein from Pseudomonas fluorescens (strain Pf0-1).